A 60-amino-acid polypeptide reads, in one-letter code: Large ribosomal subunit protein uL30 (60 aa).

This sequence belongs to the universal ribosomal protein uL30 family. In terms of assembly, part of the 50S ribosomal subunit.

The polypeptide is Large ribosomal subunit protein uL30 (Shewanella denitrificans (strain OS217 / ATCC BAA-1090 / DSM 15013)).